The chain runs to 393 residues: Cysteine desulfurase (393 aa).

Pyridoxal 5'-phosphate is bound by residues G76–T77, N155, Q183, and S203–H205. K206 is modified (N6-(pyridoxal phosphate)lysine). T241 is a binding site for pyridoxal 5'-phosphate. The Cysteine persulfide intermediate role is filled by C328. Position 328 (C328) interacts with [2Fe-2S] cluster.

This sequence belongs to the class-V pyridoxal-phosphate-dependent aminotransferase family. NifS/IscS subfamily. In terms of assembly, homodimer. Pyridoxal 5'-phosphate serves as cofactor.

The enzyme catalyses (sulfur carrier)-H + L-cysteine = (sulfur carrier)-SH + L-alanine. In terms of biological role, catalyzes the removal of elemental sulfur atoms from cysteine to produce alanine. Seems to participate in the biosynthesis of the nitrogenase metalloclusters by providing the inorganic sulfur required for the Fe-S core formation. The protein is Cysteine desulfurase of Bradyrhizobium diazoefficiens (strain JCM 10833 / BCRC 13528 / IAM 13628 / NBRC 14792 / USDA 110).